The following is a 290-amino-acid chain: Glycine--tRNA ligase alpha subunit (290 aa).

It belongs to the class-II aminoacyl-tRNA synthetase family. Tetramer of two alpha and two beta subunits.

The protein localises to the cytoplasm. It carries out the reaction tRNA(Gly) + glycine + ATP = glycyl-tRNA(Gly) + AMP + diphosphate. In Synechococcus sp. (strain CC9902), this protein is Glycine--tRNA ligase alpha subunit.